Here is a 463-residue protein sequence, read N- to C-terminus: NEDD8-activating enzyme E1 catalytic subunit (463 aa).

The residue at position 2 (A2) is an N-acetylalanine. The interaction with UBE2M N-terminus stretch occupies residues 53–70 (HPDFEPSTESLQFLLDTC). Residues 100–124 (DMDT…GRPK) and 148–171 (IQDF…SIIA) each bind ATP. 2 interaction with UBE2M N-terminus regions span residues 157 to 161 (RQFHI) and 192 to 217 (PSSI…LPGM). The segment at 227–229 (LYP) is interaction with NEDD8. The active-site Glycyl thioester intermediate is the C237. 2 interaction with NAE1 regions span residues 242 to 248 (MPRLPEH) and 292 to 295 (YNIR). An interaction with UBE2M N-terminus region spans residues 331-338 (IATSAYIP). Residues 352 to 357 (YTYTFE) form an interaction with NEDD8 region. An interaction with UBE2M core domain region spans residues 368–463 (SQLPQNIQFS…TVLFKLHFTS (96 aa)).

Belongs to the ubiquitin-activating E1 family. UBA3 subfamily. Heterodimer of UBA3 and NAE1. Interacts with NEDD8, UBE2F and UBE2M. Binds ESR1 and ESR2 with bound steroid ligand. Interacts with TBATA. Ubiquitously expressed.

The catalysed reaction is ATP + [NEDD8 protein] + [E1 NEDD8-activating enzyme]-L-cysteine = AMP + diphosphate + [E1 NEDD8-activating enzyme]-S-[NEDD8 protein]-yl-L-cysteine.. It functions in the pathway protein modification; protein neddylation. Binding of TP53BP2 to the regulatory subunit NAE1 decreases activity. Catalytic subunit of the dimeric UBA3-NAE1 E1 enzyme. E1 activates NEDD8 by first adenylating its C-terminal glycine residue with ATP, thereafter linking this residue to the side chain of the catalytic cysteine, yielding a NEDD8-UBA3 thioester and free AMP. E1 finally transfers NEDD8 to the catalytic cysteine of UBE2M. Down-regulates steroid receptor activity. Necessary for cell cycle progression. The polypeptide is NEDD8-activating enzyme E1 catalytic subunit (UBA3) (Homo sapiens (Human)).